Here is a 612-residue protein sequence, read N- to C-terminus: Dihydroxy-acid dehydratase (612 aa).

Residue D81 participates in Mg(2+) binding. Residue C122 coordinates [2Fe-2S] cluster. Residues D123 and K124 each coordinate Mg(2+). K124 carries the post-translational modification N6-carboxylysine. C193 provides a ligand contact to [2Fe-2S] cluster. Residue E489 coordinates Mg(2+). The Proton acceptor role is filled by S515.

It belongs to the IlvD/Edd family. As to quaternary structure, homodimer. [2Fe-2S] cluster serves as cofactor. The cofactor is Mg(2+).

It catalyses the reaction (2R)-2,3-dihydroxy-3-methylbutanoate = 3-methyl-2-oxobutanoate + H2O. The enzyme catalyses (2R,3R)-2,3-dihydroxy-3-methylpentanoate = (S)-3-methyl-2-oxopentanoate + H2O. The protein operates within amino-acid biosynthesis; L-isoleucine biosynthesis; L-isoleucine from 2-oxobutanoate: step 3/4. It functions in the pathway amino-acid biosynthesis; L-valine biosynthesis; L-valine from pyruvate: step 3/4. Functionally, functions in the biosynthesis of branched-chain amino acids. Catalyzes the dehydration of (2R,3R)-2,3-dihydroxy-3-methylpentanoate (2,3-dihydroxy-3-methylvalerate) into 2-oxo-3-methylpentanoate (2-oxo-3-methylvalerate) and of (2R)-2,3-dihydroxy-3-methylbutanoate (2,3-dihydroxyisovalerate) into 2-oxo-3-methylbutanoate (2-oxoisovalerate), the penultimate precursor to L-isoleucine and L-valine, respectively. The polypeptide is Dihydroxy-acid dehydratase (Xanthomonas oryzae pv. oryzae (strain MAFF 311018)).